A 547-amino-acid chain; its full sequence is Elongator complex protein 3 (547 aa).

Residues 82-372 (RTASGIAVVA…YRVQRDIPMP (291 aa)) enclose the Radical SAM core domain. [4Fe-4S] cluster-binding residues include Cys99, Cys109, and Cys112. The residue at position 161 (Ser161) is a Phosphoserine. Lys164 is a binding site for acetyl-CoA. A Phosphotyrosine modification is found at Tyr202. An N6-methyllysine modification is found at Lys229. Tyr251 carries the post-translational modification Phosphotyrosine. The region spanning 396-547 (IQCRDVRTRE…QGPYMVKTLE (152 aa)) is the N-acetyltransferase domain. Residues 474–477 (ELHV), 497–499 (FGM), and Tyr530 contribute to the acetyl-CoA site.

Belongs to the ELP3 family. As to quaternary structure, component of the elongator complex which consists of ELP1, ELP2, ELP3, ELP4, ELP5 and ELP6. ELP1, ELP2 and ELP3 form the elongator core complex. Interacts with alpha-tubulin. [4Fe-4S] cluster serves as cofactor. In terms of processing, tyrosine-phosphorylated; phosphorylation on Tyr-202 does not affect elongator complex integrity or ELP3 protein stability. Also serine/threonine-phosphorylated.

The protein resides in the cytoplasm. The protein localises to the nucleus. The catalysed reaction is uridine(34) in tRNA + acetyl-CoA + S-adenosyl-L-methionine + H2O = 5-(carboxymethyl)uridine(34) in tRNA + 5'-deoxyadenosine + L-methionine + CoA + 2 H(+). It functions in the pathway tRNA modification; 5-methoxycarbonylmethyl-2-thiouridine-tRNA biosynthesis. Functionally, catalytic tRNA acetyltransferase subunit of the elongator complex which is required for multiple tRNA modifications, including mcm5U (5-methoxycarbonylmethyl uridine), mcm5s2U (5-methoxycarbonylmethyl-2-thiouridine), and ncm5U (5-carbamoylmethyl uridine). In the elongator complex, acts as a tRNA uridine(34) acetyltransferase by mediating formation of carboxymethyluridine in the wobble base at position 34 in tRNAs. May also act as a protein lysine acetyltransferase by mediating acetylation of target proteins; such activity is however unclear in vivo and recent evidences suggest that ELP3 primarily acts as a tRNA acetyltransferase. Involved in neurogenesis: regulates the migration and branching of projection neurons in the developing cerebral cortex, through a process depending on alpha-tubulin acetylation. Required for acetylation of GJA1 in the developing cerebral cortex. The chain is Elongator complex protein 3 from Bos taurus (Bovine).